We begin with the raw amino-acid sequence, 476 residues long: Eukaryotic translation initiation factor 3 subunit L (476 aa).

The PCI domain occupies 257-452 (DAIRMFSHIL…DLDYALENDL (196 aa)).

The protein belongs to the eIF-3 subunit L family. As to quaternary structure, component of the eukaryotic translation initiation factor 3 (eIF-3) complex.

It localises to the cytoplasm. Its function is as follows. Component of the eukaryotic translation initiation factor 3 (eIF-3) complex, which is involved in protein synthesis of a specialized repertoire of mRNAs and, together with other initiation factors, stimulates binding of mRNA and methionyl-tRNAi to the 40S ribosome. The eIF-3 complex specifically targets and initiates translation of a subset of mRNAs involved in cell proliferation. The protein is Eukaryotic translation initiation factor 3 subunit L of Aspergillus clavatus (strain ATCC 1007 / CBS 513.65 / DSM 816 / NCTC 3887 / NRRL 1 / QM 1276 / 107).